Here is a 358-residue protein sequence, read N- to C-terminus: Pyruvate dehydrogenase E1 component subunit alpha (358 aa).

Heterodimer of an alpha and a beta chain. Thiamine diphosphate serves as cofactor.

It catalyses the reaction N(6)-[(R)-lipoyl]-L-lysyl-[protein] + pyruvate + H(+) = N(6)-[(R)-S(8)-acetyldihydrolipoyl]-L-lysyl-[protein] + CO2. Functionally, the pyruvate dehydrogenase complex catalyzes the overall conversion of pyruvate to acetyl-CoA and CO(2). It contains multiple copies of three enzymatic components: pyruvate dehydrogenase (E1), dihydrolipoamide acetyltransferase (E2) and lipoamide dehydrogenase (E3). The polypeptide is Pyruvate dehydrogenase E1 component subunit alpha (pdhA) (Mycoplasma genitalium (strain ATCC 33530 / DSM 19775 / NCTC 10195 / G37) (Mycoplasmoides genitalium)).